Here is a 314-residue protein sequence, read N- to C-terminus: MATELDKIFLTLAIVEFIIGMLGNVFIGLANCSEGIKNQKVFSVDFILTCLAISTIGHLLVILFDSHVAGLAPHLYATDRVVRPVTVLWHMTNHLTTWLATCLSIFYFFKIAHFPHSLFLWLRWRMNRVIAILLTLSLFLLIFDCLVLEMFIDISLNIIDKSNLTLYLDESKTPYDKLFLLKTLLSLNSFIPFSLCLTSLLFLFLSLVRHTRNLKLSSLGSRDSSTEAHRRAMKMVMSFLFLFIVHFFSLQVANWTFCILGNNKYTQFVMLALHAFPSCHSFILILGNSKLRQTAVRLLWHLRNYTKRPNPLPL.

Over 1 to 7 (MATELDK) the chain is Extracellular. The chain crosses the membrane as a helical span at residues 8–28 (IFLTLAIVEFIIGMLGNVFIG). The Cytoplasmic portion of the chain corresponds to 29 to 50 (LANCSEGIKNQKVFSVDFILTC). Residues 51-71 (LAISTIGHLLVILFDSHVAGL) form a helical membrane-spanning segment. Residues 72 to 101 (APHLYATDRVVRPVTVLWHMTNHLTTWLAT) are Extracellular-facing. A helical transmembrane segment spans residues 102-122 (CLSIFYFFKIAHFPHSLFLWL). The Cytoplasmic segment spans residues 123–127 (RWRMN). A helical membrane pass occupies residues 128–148 (RVIAILLTLSLFLLIFDCLVL). Topologically, residues 149-187 (EMFIDISLNIIDKSNLTLYLDESKTPYDKLFLLKTLLSL) are extracellular. A glycan (N-linked (GlcNAc...) asparagine) is linked at Asn163. The helical transmembrane segment at 188–208 (NSFIPFSLCLTSLLFLFLSLV) threads the bilayer. The Cytoplasmic segment spans residues 209 to 238 (RHTRNLKLSSLGSRDSSTEAHRRAMKMVMS). The helical transmembrane segment at 239–259 (FLFLFIVHFFSLQVANWTFCI) threads the bilayer. Residues 260–265 (LGNNKY) are Extracellular-facing. The helical transmembrane segment at 266–286 (TQFVMLALHAFPSCHSFILIL) threads the bilayer. At 287–314 (GNSKLRQTAVRLLWHLRNYTKRPNPLPL) the chain is on the cytoplasmic side.

It belongs to the G-protein coupled receptor T2R family.

The protein resides in the membrane. Its function is as follows. Receptor that may play a role in the perception of bitterness and is gustducin-linked. May play a role in sensing the chemical composition of the gastrointestinal content. The activity of this receptor may stimulate alpha gustducin, mediate PLC-beta-2 activation and lead to the gating of TRPM5. This Papio hamadryas (Hamadryas baboon) protein is Taste receptor type 2 member 42 (TAS2R42).